A 529-amino-acid chain; its full sequence is Cytochrome P450 monooxygenase acuD (529 aa).

A helical transmembrane segment spans residues 8-28; the sequence is FAVIAASAAAVAGVLFLIYAA. N-linked (GlcNAc...) asparagine glycosylation is present at Asn81. Cys449 provides a ligand contact to heme.

It belongs to the cytochrome P450 family. The cofactor is heme.

The protein resides in the endoplasmic reticulum membrane. The catalysed reaction is 3-hydroxybenzyl alcohol + reduced [NADPH--hemoprotein reductase] + O2 = gentisyl alcohol + oxidized [NADPH--hemoprotein reductase] + H2O + H(+). It functions in the pathway secondary metabolite biosynthesis. In terms of biological role, cytochrome P450 monooxygenase; part of the gene cluster that mediates the biosynthesis of aculins. The pathway begins with the synthesis of 6-methylsalicylic acid by the polyketide synthase (PKS) acuA via condensation of acetate and malonate units. The 6-methylsalicylic acid decarboxylase acuB then catalyzes the decarboxylation of 6-methylsalicylic acid to yield m-cresol (also known as 3-methylphenol). These first reactions occur in the cytosol. The intermediate m-cresol is then transported into the endoplasmic reticulum where the cytochrome P450 monooxygenase acuC converts it to m-hydroxybenzyl alcohol, which is further converted to gentisyl alcohol by the cytochrome P450 monooxygenase acuD. Gentisyl alcohol is further oxidized by the oxidoreductase acuE that probably catalyzes hydroxylation of the aromatic ring. The aromatic system might then be opened by oxidation through a Baeyer-Villiger type of oxidation, which could be catalyzed by acuF, with the carboxylic acid at C-1 subsequently reduced to an aldehyde by acuG. Subsequently, a hemiacetal is formed, before the dehydrogenase acuH would reduce the double bond between C-4 and C-6. Finally, keto-enol tautomerism results in formation of aculinic acid, which exists as two diastereomers (both R/S configurations at C-1) by non-enzymatic hemiacetal formation. The carboxypeptidase acuI could be involved in the linking of aculinic acid to an aculene A moiety produced by the aculene biosynthesis cluster and which leads to the production of aculin A. AcuI may also be involved in the attachment of proline to aculinic acid to form epi-aculins A and B. The protein is Cytochrome P450 monooxygenase acuD of Aspergillus aculeatus (strain ATCC 16872 / CBS 172.66 / WB 5094).